The following is a 133-amino-acid chain: Nickel-responsive regulator (133 aa).

Residues His-76, His-87, His-89, and Cys-95 each coordinate Ni(2+).

It belongs to the transcriptional regulatory CopG/NikR family. Homotetramer. It depends on Ni(2+) as a cofactor.

Functionally, transcriptional repressor of the nikABCDE operon. Is active in the presence of excessive concentrations of intracellular nickel. This Salmonella paratyphi A (strain ATCC 9150 / SARB42) protein is Nickel-responsive regulator.